The following is a 242-amino-acid chain: Demethylmenaquinone methyltransferase (242 aa).

S-adenosyl-L-methionine-binding residues include Thr-74 and Asp-93.

This sequence belongs to the class I-like SAM-binding methyltransferase superfamily. MenG/UbiE family.

The enzyme catalyses a 2-demethylmenaquinol + S-adenosyl-L-methionine = a menaquinol + S-adenosyl-L-homocysteine + H(+). Its pathway is quinol/quinone metabolism; menaquinone biosynthesis; menaquinol from 1,4-dihydroxy-2-naphthoate: step 2/2. Its function is as follows. Methyltransferase required for the conversion of demethylmenaquinol (DMKH2) to menaquinol (MKH2). This Chlorobaculum tepidum (strain ATCC 49652 / DSM 12025 / NBRC 103806 / TLS) (Chlorobium tepidum) protein is Demethylmenaquinone methyltransferase.